Consider the following 268-residue polypeptide: Ubiquinone biosynthesis protein COQ4 homolog, mitochondrial (268 aa).

Residues His-171, Asp-172, His-175, and Glu-187 each contribute to the Zn(2+) site.

It belongs to the COQ4 family. In terms of assembly, component of a multi-subunit COQ enzyme complex. Requires Zn(2+) as cofactor.

The protein localises to the mitochondrion inner membrane. The catalysed reaction is a 4-hydroxy-3-methoxy-5-(all-trans-polyprenyl)benzoate + H(+) = a 2-methoxy-6-(all-trans-polyprenyl)phenol + CO2. The protein operates within cofactor biosynthesis; ubiquinone biosynthesis. Its function is as follows. Lyase that catalyzes the C1-decarboxylation of 4-hydroxy-3-methoxy-5-(all-trans-polyprenyl)benzoic acid into 2-methoxy-6-(all-trans-polyprenyl)phenol during ubiquinone biosynthesis. The protein is Ubiquinone biosynthesis protein COQ4 homolog, mitochondrial of Drosophila sechellia (Fruit fly).